A 1269-amino-acid chain; its full sequence is Furin-like protease 1, isoforms 1/1-X/2 (1269 aa).

Residues 1–57 are disordered; sequence MKNDVVRWSRQPTSNTTNSSSSSRSDSNSTHKHRSKSNKLNARQLGSNAARSCQQRS. The span at 13-28 shows a compositional bias: low complexity; sequence TSNTTNSSSSSRSDSN. Residues Asn15, Asn18, and Asn28 are each glycosylated (N-linked (GlcNAc...) asparagine). Residues 38–57 show a composition bias toward polar residues; the sequence is NKLNARQLGSNAARSCQQRS. N-linked (GlcNAc...) asparagine glycosylation occurs at Asn108. The chain crosses the membrane as a helical span at residues 119 to 139; sequence VFLLALQFSAVVFLCNINVGF. Over residues 150–163 the composition is skewed to low complexity; the sequence is SAGGSSPAAPSSAP. The disordered stretch occupies residues 150-187; it reads SAGGSSPAAPSSAPSSPPTVAVPPPPPPSSALKVDPNG. Residues 164–178 are compositionally biased toward pro residues; sequence SSPPTVAVPPPPPPS. Asn333 carries N-linked (GlcNAc...) asparagine glycosylation. The region spanning 340-654 is the Peptidase S8 domain; that stretch reads MWYLNRGGGL…YGLMDAAEMV (315 aa). Catalysis depends on charge relay system residues Asp372 and His413. Asn426 is a glycosylation site (N-linked (GlcNAc...) asparagine). 2 disulfide bridges follow: Cys430-Cys579 and Cys522-Cys552. The active-site Charge relay system is Ser587. N-linked (GlcNAc...) asparagine glycosylation is present at Asn606. The P/Homo B domain maps to 662–793; that stretch reads AVPEQQRCEI…SLIFYGTTQS (132 aa). A disulfide bond links Cys669 and Cys695. Asn727 and Asn814 each carry an N-linked (GlcNAc...) asparagine glycan. 4 disordered regions span residues 796–875, 891–1015, 1031–1050, and 1057–1083; these read PNDP…PPKQ, ANGK…NSRI, ELEPYENSSPKGKPKQAKQG, and LFKPTNGGNSRQGNTKKSPSVPPPSQT. Low complexity-rich tracts occupy residues 811 to 821 and 835 to 851; these read TTPNSSSTTSN and PNNFGSSPSGGSKLPLG. The N-linked (GlcNAc...) asparagine glycan is linked to Asn857. A compositionally biased stretch (polar residues) spans 858–868; sequence KSSYVTNNPLL. 2 N-linked (GlcNAc...) asparagine glycosylation sites follow: Asn897 and Asn908. Low complexity-rich tracts occupy residues 905 to 915 and 929 to 940; these read NKGNKSNNGNK and TTQSTIIQTSTS. The segment covering 975–985 has biased composition (basic and acidic residues); that stretch reads KSYDEKSRKVV. N-linked (GlcNAc...) asparagine glycosylation is present at Asn994. Residues 1005-1014 are compositionally biased toward polar residues; it reads ESTTTSSNSR. Polar residues predominate over residues 1062 to 1074; sequence NGGNSRQGNTKKS. Residues 1233-1253 form a helical membrane-spanning segment; sequence LGLSLLFFMIMQVFFLNFKHA.

This sequence belongs to the peptidase S8 family. Furin subfamily. Ca(2+) is required as a cofactor. As to expression, in adults, isoform 1-X is expressed in CNS, fat body and female reproductive tissues, and in embryos, in CNS, tracheal pits, hindgut, posterior spiracles and anal pads.

It is found in the golgi apparatus membrane. The enzyme catalyses Release of mature proteins from their proproteins by cleavage of -Arg-Xaa-Yaa-Arg-|-Zaa- bonds, where Xaa can be any amino acid and Yaa is Arg or Lys. Releases albumin, complement component C3 and von Willebrand factor from their respective precursors.. Its function is as follows. Furin is likely to represent the ubiquitous endoprotease activity within constitutive secretory pathways and capable of cleavage at the RX(K/R)R consensus motif. The polypeptide is Furin-like protease 1, isoforms 1/1-X/2 (Fur1) (Drosophila melanogaster (Fruit fly)).